The primary structure comprises 292 residues: 4-hydroxy-tetrahydrodipicolinate synthase (292 aa).

A pyruvate-binding site is contributed by threonine 45. Catalysis depends on tyrosine 133, which acts as the Proton donor/acceptor. Lysine 161 acts as the Schiff-base intermediate with substrate in catalysis. Position 203 (isoleucine 203) interacts with pyruvate.

The protein belongs to the DapA family. Homodimer.

The protein resides in the cytoplasm. It catalyses the reaction L-aspartate 4-semialdehyde + pyruvate = (2S,4S)-4-hydroxy-2,3,4,5-tetrahydrodipicolinate + H2O + H(+). It participates in amino-acid biosynthesis; L-lysine biosynthesis via DAP pathway; (S)-tetrahydrodipicolinate from L-aspartate: step 3/4. In terms of biological role, catalyzes the condensation of (S)-aspartate-beta-semialdehyde [(S)-ASA] and pyruvate to 4-hydroxy-tetrahydrodipicolinate (HTPA). In Pseudomonas aeruginosa (strain ATCC 15692 / DSM 22644 / CIP 104116 / JCM 14847 / LMG 12228 / 1C / PRS 101 / PAO1), this protein is 4-hydroxy-tetrahydrodipicolinate synthase.